We begin with the raw amino-acid sequence, 456 residues long: Anthocyanidin 3-O-glucosyltransferase UFGT (456 aa).

Residue Ser-18 participates in kaempferol binding. Ser-18 lines the quercetin pocket. A UDP-binding site is contributed by Thr-19. Thr-19 contacts UDP-alpha-D-glucose. Residues His-20 and Gln-84 each contribute to the kaempferol site. His-20 (proton acceptor) is an active-site residue. Gln-84 is a binding site for quercetin. Asp-119 serves as the catalytic Charge relay. Thr-141 is a binding site for UDP-alpha-D-glucose. 2 residues coordinate kaempferol: His-150 and Gln-188. Positions 150 and 188 each coordinate quercetin. UDP-binding residues include Thr-280, Ser-306, Trp-332, Ala-333, and His-350. Thr-280, Ser-306, Trp-332, Ala-333, His-350, Trp-353, Asn-354, Ser-355, and Glu-358 together coordinate UDP-alpha-D-glucose. UDP-binding residues include Asn-354, Ser-355, and Glu-358. Gly-373 is a binding site for quercetin. Residues Asp-374 and Gln-375 each coordinate UDP-alpha-D-glucose.

Belongs to the UDP-glycosyltransferase family. In terms of tissue distribution, detected only in berry skin.

The catalysed reaction is an anthocyanidin + UDP-alpha-D-glucose + H(+) = an anthocyanidin 3-O-beta-D-glucoside + UDP. The enzyme catalyses cyanidin + UDP-alpha-D-glucose = cyanidin 3-O-beta-D-glucoside + UDP + H(+). It carries out the reaction delphinidin + UDP-alpha-D-glucose = delphinidin 3-O-beta-D-glucoside + UDP. It catalyses the reaction peonidin + UDP-alpha-D-glucose = peonidin 3-O-beta-D-glucoside + UDP. The catalysed reaction is pelargonidin + UDP-alpha-D-glucose = pelargonidin 3-O-beta-D-glucoside + UDP. The enzyme catalyses malvidin + UDP-alpha-D-glucose = malvidin 3-O-beta-D-glucoside + UDP. It carries out the reaction a flavonol + UDP-alpha-D-glucose = a flavonol 3-O-beta-D-glucoside + UDP + H(+). The protein operates within pigment biosynthesis; anthocyanin biosynthesis. Inhibited by Mn(2+) and Zn(2+). Functionally, in the presence of other necessary color factors, this glycosylation reaction allows the accumulation of anthocyanin pigments. Involved in the formation of red wine pigments. UDP-glucose (UDP-Glc) is the physiological sugar donor, and cyanidin is the natural acceptor in vivo. Can glucosylate the anthocyanidins delphinidin, peonidin, pelargonidin and malvidin. The flavonols quercitin and kaempferol can also be glucosylated in vitro, but with glucosylation rates 50-100 times lower than cyanidin. In vitro, can use UDP-Glc, UDP-5SGlc, UDP-Xyl, UDP-Man, UDP-Gal, UDP-GlcNAc, GDP-Glc, dTDP-Glc and dTDP-Xyl as sugar donors, but not UDP-6OMeGal, UDP-Ara, UDP-6FGal, UDP-GlcN, UDP-2FGal, UDP-5SAra, GDP-Man, GDP-Fuc, UDP-Fuc or UDP-Rha. The sequence is that of Anthocyanidin 3-O-glucosyltransferase UFGT from Vitis vinifera (Grape).